Here is a 320-residue protein sequence, read N- to C-terminus: Methionyl-tRNA formyltransferase (320 aa).

114-117 (SLLP) provides a ligand contact to (6S)-5,6,7,8-tetrahydrofolate.

It belongs to the Fmt family.

It catalyses the reaction L-methionyl-tRNA(fMet) + (6R)-10-formyltetrahydrofolate = N-formyl-L-methionyl-tRNA(fMet) + (6S)-5,6,7,8-tetrahydrofolate + H(+). Functionally, attaches a formyl group to the free amino group of methionyl-tRNA(fMet). The formyl group appears to play a dual role in the initiator identity of N-formylmethionyl-tRNA by promoting its recognition by IF2 and preventing the misappropriation of this tRNA by the elongation apparatus. This is Methionyl-tRNA formyltransferase from Acinetobacter baumannii (strain AB307-0294).